The sequence spans 75 residues: Small ribosomal subunit protein bS18 (75 aa).

The protein belongs to the bacterial ribosomal protein bS18 family. Part of the 30S ribosomal subunit. Forms a tight heterodimer with protein bS6.

Binds as a heterodimer with protein bS6 to the central domain of the 16S rRNA, where it helps stabilize the platform of the 30S subunit. This is Small ribosomal subunit protein bS18 from Acinetobacter baumannii (strain AB307-0294).